A 308-amino-acid chain; its full sequence is GATA transcription factor 9 (308 aa).

Residues 34–57 (DDGLNTLPDSSTLSTGTLTDSSNS) are disordered. Residues 39-57 (TLPDSSTLSTGTLTDSSNS) are compositionally biased toward low complexity. The short motif at 142–149 (KARSKRSR) is the Nuclear localization signal element. The GATA-type zinc finger occupies 193–247 (SGGGRRCLHCATEKTPQWRTGPMGPKTLCNACGVRYKSGRLVPEYRPASSPTFVM).

This sequence belongs to the type IV zinc-finger family. Class A subfamily.

It is found in the nucleus. Transcriptional activator that specifically binds 5'-GATA-3' or 5'-GAT-3' motifs within gene promoters. May be involved in the regulation of some light-responsive genes. In Arabidopsis thaliana (Mouse-ear cress), this protein is GATA transcription factor 9 (GATA9).